The sequence spans 703 residues: Polyribonucleotide nucleotidyltransferase (703 aa).

Mg(2+) is bound by residues D486 and D492. The KH domain maps to 553–612 (PKIEIIHINPDKIRDVIGPGGKKINEIIDATGVKLDIEQDGTVFIGSSDASMIEAAKKLI). The S1 motif domain maps to 622 to 690 (GQIYMATVKR…KQGRVNASRK (69 aa)).

The protein belongs to the polyribonucleotide nucleotidyltransferase family. Mg(2+) is required as a cofactor.

The protein resides in the cytoplasm. The catalysed reaction is RNA(n+1) + phosphate = RNA(n) + a ribonucleoside 5'-diphosphate. Its function is as follows. Involved in mRNA degradation. Catalyzes the phosphorolysis of single-stranded polyribonucleotides processively in the 3'- to 5'-direction. The sequence is that of Polyribonucleotide nucleotidyltransferase from Macrococcus caseolyticus (strain JCSC5402) (Macrococcoides caseolyticum).